Reading from the N-terminus, the 442-residue chain is tRNA-2-methylthio-N(6)-dimethylallyladenosine synthase (442 aa).

An MTTase N-terminal domain is found at 5–122 (KKVFIKTLGC…LPEMIKQKQK (118 aa)). [4Fe-4S] cluster is bound by residues cysteine 14, cysteine 51, cysteine 85, cysteine 159, cysteine 163, and cysteine 166. Positions 145-378 (KAEGAKAYVS…DLLNSNAQII (234 aa)) constitute a Radical SAM core domain. One can recognise a TRAM domain in the interval 380–442 (RQMVGTNQRI…LPNSLRGELI (63 aa)).

This sequence belongs to the methylthiotransferase family. MiaB subfamily. In terms of assembly, monomer. It depends on [4Fe-4S] cluster as a cofactor.

It localises to the cytoplasm. It catalyses the reaction N(6)-dimethylallyladenosine(37) in tRNA + (sulfur carrier)-SH + AH2 + 2 S-adenosyl-L-methionine = 2-methylsulfanyl-N(6)-dimethylallyladenosine(37) in tRNA + (sulfur carrier)-H + 5'-deoxyadenosine + L-methionine + A + S-adenosyl-L-homocysteine + 2 H(+). Functionally, catalyzes the methylthiolation of N6-(dimethylallyl)adenosine (i(6)A), leading to the formation of 2-methylthio-N6-(dimethylallyl)adenosine (ms(2)i(6)A) at position 37 in tRNAs that read codons beginning with uridine. This Francisella tularensis subsp. holarctica (strain LVS) protein is tRNA-2-methylthio-N(6)-dimethylallyladenosine synthase.